Here is a 169-residue protein sequence, read N- to C-terminus: MEMLQGLLLWMLLSVGGVWASRGPLRPLCRPINATLAAEKEACPICITFTTSICAGYCRSMVRVMPAALPPIPQPVCTYRELRFGSIRLPGCPPGVDPMVSFPVALSCHCGPCRLKTTDCGGPRDHPLACAPQTSSSCKDPPSQPLTSTSTPTPGASRRSSHPLPINTS.

The N-terminal stretch at 1–20 (MEMLQGLLLWMLLSVGGVWA) is a signal peptide. Cystine bridges form between Cys-29–Cys-77, Cys-43–Cys-92, Cys-46–Cys-130, Cys-54–Cys-108, Cys-58–Cys-110, and Cys-113–Cys-120. N-linked (GlcNAc...) asparagine glycosylation is present at Asn-33. Positions 131 to 169 (APQTSSSCKDPPSQPLTSTSTPTPGASRRSSHPLPINTS) are disordered. The segment covering 145 to 158 (PLTSTSTPTPGASR) has biased composition (low complexity).

It belongs to the glycoprotein hormones subunit beta family. As to quaternary structure, heterodimer of a common alpha chain and a unique beta chain which confers biological specificity to thyrotropin, lutropin, follitropin and gonadotropin.

The protein resides in the secreted. Promotes spermatogenesis and ovulation by stimulating the testes and ovaries to synthesize steroids. The polypeptide is Lutropin/choriogonadotropin subunit beta (LHB) (Equus asinus (Donkey)).